A 397-amino-acid polypeptide reads, in one-letter code: L-asparaginase-like protein CG4372 (397 aa).

Residues 1 to 22 (MLAQSCCLRLLILLLLFTTIGS) form the signal peptide. 3 disulfide bridges follow: Cys90-Cys95, Cys189-Cys205, and Cys344-Cys371.

The protein belongs to the Ntn-hydrolase family.

This chain is L-asparaginase-like protein CG4372, found in Drosophila melanogaster (Fruit fly).